The sequence spans 193 residues: Molybdopterin synthase catalytic subunit (193 aa).

Substrate contacts are provided by residues 118–119 (HR), Lys-134, and 141–143 (KKE). A disordered region spans residues 159–193 (DRTTTDGTTASSPAPATRPAKGGGCCGRKVRVNES). Over residues 163 to 178 (TDGTTASSPAPATRPA) the composition is skewed to low complexity.

Belongs to the MoaE family. MOCS2B subfamily. As to quaternary structure, heterotetramer; composed of 2 small (MOCS2A) and 2 large (MOCS2B) subunits.

It is found in the cytoplasm. The catalysed reaction is 2 [molybdopterin-synthase sulfur-carrier protein]-C-terminal-Gly-aminoethanethioate + cyclic pyranopterin phosphate + H2O = molybdopterin + 2 [molybdopterin-synthase sulfur-carrier protein]-C-terminal Gly-Gly + 2 H(+). Its pathway is cofactor biosynthesis; molybdopterin biosynthesis. Catalytic subunit of the molybdopterin synthase complex, a complex that catalyzes the conversion of precursor Z into molybdopterin. Acts by mediating the incorporation of 2 sulfur atoms from thiocarboxylated MOCS2A into precursor Z to generate a dithiolene group. In Oryza sativa subsp. japonica (Rice), this protein is Molybdopterin synthase catalytic subunit.